Consider the following 319-residue polypeptide: Cytochrome f (319 aa).

An N-terminal signal peptide occupies residues 1–35 (METRNIFSWIKEQITRSISVSLMIYIITRTAVSNA). Positions 36, 56, 59, and 60 each coordinate heme. The chain crosses the membrane as a helical span at residues 285 to 305 (VQGLLFFLASVILAQIFLVLK).

This sequence belongs to the cytochrome f family. The 4 large subunits of the cytochrome b6-f complex are cytochrome b6, subunit IV (17 kDa polypeptide, petD), cytochrome f and the Rieske protein, while the 4 small subunits are PetG, PetL, PetM and PetN. The complex functions as a dimer. It depends on heme as a cofactor.

The protein localises to the plastid. Its subcellular location is the chloroplast thylakoid membrane. Its function is as follows. Component of the cytochrome b6-f complex, which mediates electron transfer between photosystem II (PSII) and photosystem I (PSI), cyclic electron flow around PSI, and state transitions. In Coffea arabica (Arabian coffee), this protein is Cytochrome f.